A 335-amino-acid chain; its full sequence is Mycobacterial beta-ketoacyl-[acyl-carrier-protein] synthase III (335 aa).

Active-site residues include C122 and H258. Residues 259 to 263 are ACP-binding; it reads QANSR. Residue N289 is part of the active site.

Belongs to the thiolase-like superfamily. FabH family. As to quaternary structure, homodimer.

The protein resides in the cytoplasm. It catalyses the reaction malonyl-[ACP] + dodecanoyl-CoA + H(+) = 3-oxotetradecanoyl-[ACP] + CO2 + CoA. It participates in lipid metabolism; fatty acid biosynthesis. It functions in the pathway lipid metabolism; mycolic acid biosynthesis. Its function is as follows. Catalyzes the condensation reaction of fatty acid synthesis by the addition to an acyl acceptor of two carbons from malonyl-ACP. Catalyzes the first condensation reaction which initiates fatty acid synthesis and may therefore play a role in governing the total rate of fatty acid production. Possesses both acetoacetyl-ACP synthase and acetyl transacylase activities. Its substrate specificity determines the biosynthesis of branched-chain and/or straight-chain of fatty acids. This Mycobacterium marinum (strain ATCC BAA-535 / M) protein is Mycobacterial beta-ketoacyl-[acyl-carrier-protein] synthase III.